Reading from the N-terminus, the 277-residue chain is Ribosomal RNA small subunit methyltransferase A (277 aa).

Residues Asn-23, Leu-25, Gly-50, Glu-75, Asp-98, and Asn-121 each contribute to the S-adenosyl-L-methionine site.

This sequence belongs to the class I-like SAM-binding methyltransferase superfamily. rRNA adenine N(6)-methyltransferase family. RsmA subfamily.

It is found in the cytoplasm. The catalysed reaction is adenosine(1518)/adenosine(1519) in 16S rRNA + 4 S-adenosyl-L-methionine = N(6)-dimethyladenosine(1518)/N(6)-dimethyladenosine(1519) in 16S rRNA + 4 S-adenosyl-L-homocysteine + 4 H(+). In terms of biological role, specifically dimethylates two adjacent adenosines (A1518 and A1519) in the loop of a conserved hairpin near the 3'-end of 16S rRNA in the 30S particle. May play a critical role in biogenesis of 30S subunits. The chain is Ribosomal RNA small subunit methyltransferase A from Paraburkholderia xenovorans (strain LB400).